The sequence spans 134 residues: Crustacean hyperglycemic hormones isoform A (134 aa).

A signal peptide spans 1–24 (MMACRTLCLVVVMVASLGTSGVGG). Q61 is subject to Pyrrolidone carboxylic acid. F63 carries the post-translational modification D-phenylalanine; in form CHH-A-II. Disulfide bonds link C67–C103, C83–C99, and C86–C112. The residue at position 132 (V132) is a Valine amide.

The protein belongs to the arthropod CHH/MIH/GIH/VIH hormone family. Stereoinversion of L-Phe (form CHH-A-I) to D-Phe (form CHH-A-II). Produced by the medulla terminalis X-organ in the eyestalks and transported to the sinus gland where they are stored and released. Present also in the ventral nervous system.

The protein localises to the secreted. In terms of biological role, CHH is the most abundant hormone in the sinus gland of isopods and decapods which controls the blood sugar level. Has a secretagogue action over the amylase released from the midgut gland. May act as a stress hormone. MIH may inhibit Y-organs where molting hormone (ecdysteroid) is secreted and a molting cycle is initiated when MIH secretion diminishes or stops. The sequence is that of Crustacean hyperglycemic hormones isoform A from Homarus americanus (American lobster).